The following is a 318-amino-acid chain: MRFNVVLFMLIVALLGGLSTCSSEVPIGFDTDELSFDMSLVLLTGDMQTKASDPNYTYATTEELTIQNCHVAVFDKDGKRIYFKNFYSKDLGEMKTIGNLSGYELQLEGVRTFGKEDKKVSVLVVANANNANNSPFDNLTTYDGVDNSYTAKTIAKGPVTASLLVKIGKSETTLKYNQDNAPVTVSLIQLSAKIEYTGVYKKENGELLEGFSLTKVAGLNASSKITIFNTSAVENGAFSDLAYPTTKPVTFYTYEISDAFKEVILSVQSGVEPKEYPFPANKFIKGNYYRIKGLKSSTEIEWVLENVEDKEVTLDPFE.

The N-terminal stretch at 1 to 24 (MRFNVVLFMLIVALLGGLSTCSSE) is a signal peptide. A propeptide spanning residues 25–50 (VPIGFDTDELSFDMSLVLLTGDMQTK) is cleaved from the precursor.

The protein belongs to the bacteroidetes fimbrillin superfamily. FimA/Mfa1 family. As to quaternary structure, may be part of the fimbrial tip.

The protein resides in the fimbrium. Functionally, putative component of the fimbrium tip. Fimbriae are filamentous appendages on the cell surface that mediate cell adhesion and biofilm formation. The polypeptide is Putative fimbrium tip subunit Fim1F (Parabacteroides distasonis (strain ATCC 8503 / DSM 20701 / CIP 104284 / JCM 5825 / NCTC 11152)).